The following is a 304-amino-acid chain: N-acetylmuramic acid 6-phosphate etherase (304 aa).

The region spanning 62 to 225 is the SIS domain; sequence IVTAFRQGGR…TTASMILMGK (164 aa). Glu-90 (proton donor) is an active-site residue. Glu-121 is an active-site residue.

Belongs to the GCKR-like family. MurNAc-6-P etherase subfamily. In terms of assembly, homodimer.

The enzyme catalyses N-acetyl-D-muramate 6-phosphate + H2O = N-acetyl-D-glucosamine 6-phosphate + (R)-lactate. It participates in amino-sugar metabolism; 1,6-anhydro-N-acetylmuramate degradation. It functions in the pathway amino-sugar metabolism; N-acetylmuramate degradation. Its pathway is cell wall biogenesis; peptidoglycan recycling. In terms of biological role, specifically catalyzes the cleavage of the D-lactyl ether substituent of MurNAc 6-phosphate, producing GlcNAc 6-phosphate and D-lactate. Together with AnmK, is also required for the utilization of anhydro-N-acetylmuramic acid (anhMurNAc) either imported from the medium or derived from its own cell wall murein, and thus plays a role in cell wall recycling. The protein is N-acetylmuramic acid 6-phosphate etherase of Actinobacillus succinogenes (strain ATCC 55618 / DSM 22257 / CCUG 43843 / 130Z).